Reading from the N-terminus, the 143-residue chain is Nucleoside diphosphate kinase (143 aa).

ATP is bound by residues Lys11, Phe59, Arg87, Thr93, Arg104, and Asn114. His117 (pros-phosphohistidine intermediate) is an active-site residue.

Belongs to the NDK family. Homotetramer. It depends on Mg(2+) as a cofactor.

The protein resides in the cytoplasm. The enzyme catalyses a 2'-deoxyribonucleoside 5'-diphosphate + ATP = a 2'-deoxyribonucleoside 5'-triphosphate + ADP. It catalyses the reaction a ribonucleoside 5'-diphosphate + ATP = a ribonucleoside 5'-triphosphate + ADP. Major role in the synthesis of nucleoside triphosphates other than ATP. The ATP gamma phosphate is transferred to the NDP beta phosphate via a ping-pong mechanism, using a phosphorylated active-site intermediate. This chain is Nucleoside diphosphate kinase, found in Shewanella sediminis (strain HAW-EB3).